The chain runs to 143 residues: Transcription antitermination protein NusB (143 aa).

This sequence belongs to the NusB family.

Involved in transcription antitermination. Required for transcription of ribosomal RNA (rRNA) genes. Binds specifically to the boxA antiterminator sequence of the ribosomal RNA (rrn) operons. The chain is Transcription antitermination protein NusB from Buchnera aphidicola subsp. Acyrthosiphon pisum (strain 5A).